A 147-amino-acid chain; its full sequence is Hemoglobin subunit gamma-1 (147 aa).

Position 2 is an N-acetylglycine (Gly-2). The Globin domain occupies 3-147 (HFTEEDKATI…VASALSSRYH (145 aa)). Position 13 is a phosphothreonine (Thr-13). Ser-45, Ser-51, and Ser-53 each carry phosphoserine. At Lys-60 the chain carries N6-acetyllysine. His-64 contacts heme b. The residue at position 83 (Lys-83) is an N6-acetyllysine. His-93 provides a ligand contact to heme b. S-nitrosocysteine is present on Cys-94. Ser-140 bears the Phosphoserine mark.

This sequence belongs to the globin family. Heterotetramer of two alpha chains and two gamma chains in fetal hemoglobin (Hb F). The ratio of gamma-G to gamma-A chains in is approximately 2:1 in infant chimpanzee, and 1:2 in the adult. As to expression, red blood cells.

Functionally, gamma chains make up the fetal hemoglobin F, in combination with alpha chains. This chain is Hemoglobin subunit gamma-1 (HBG1), found in Pan troglodytes (Chimpanzee).